Reading from the N-terminus, the 319-residue chain is Acetyl-coenzyme A carboxylase carboxyl transferase subunit alpha (319 aa).

Positions 35–296 constitute a CoA carboxyltransferase C-terminal domain; sequence NLDEEVQRLR…KAQLLADLAD (262 aa).

It belongs to the AccA family. Acetyl-CoA carboxylase is a heterohexamer composed of biotin carboxyl carrier protein (AccB), biotin carboxylase (AccC) and two subunits each of ACCase subunit alpha (AccA) and ACCase subunit beta (AccD).

It is found in the cytoplasm. It carries out the reaction N(6)-carboxybiotinyl-L-lysyl-[protein] + acetyl-CoA = N(6)-biotinyl-L-lysyl-[protein] + malonyl-CoA. It functions in the pathway lipid metabolism; malonyl-CoA biosynthesis; malonyl-CoA from acetyl-CoA: step 1/1. Functionally, component of the acetyl coenzyme A carboxylase (ACC) complex. First, biotin carboxylase catalyzes the carboxylation of biotin on its carrier protein (BCCP) and then the CO(2) group is transferred by the carboxyltransferase to acetyl-CoA to form malonyl-CoA. The polypeptide is Acetyl-coenzyme A carboxylase carboxyl transferase subunit alpha (Erwinia tasmaniensis (strain DSM 17950 / CFBP 7177 / CIP 109463 / NCPPB 4357 / Et1/99)).